A 233-amino-acid polypeptide reads, in one-letter code: LOB domain-containing protein 40 (233 aa).

The region spanning 3–109 (MSCNGCRVLR…VEAVMRGSPV (107 aa)) is the LOB domain. Basic and acidic residues predominate over residues 143–160 (KRRSRGACKEERNVRSLS). The tract at residues 143-183 (KRRSRGACKEERNVRSLSHESSLSHESPVSSEETTTEEPKT) is disordered. The span at 161 to 175 (HESSLSHESPVSSEE) shows a compositional bias: low complexity.

It belongs to the LOB domain-containing protein family. In terms of tissue distribution, expressed in roots and flowers.

The polypeptide is LOB domain-containing protein 40 (LBD40) (Arabidopsis thaliana (Mouse-ear cress)).